The sequence spans 1272 residues: RING finger protein PFE0100w (1272 aa).

The segment at 216 to 260 is disordered; that stretch reads INKINDVSNNDPKKDNNEKNTSSNNITHNNYNDISNNNNNNNNIN. A compositionally biased stretch (low complexity) spans 234 to 260; it reads KNTSSNNITHNNYNDISNNNNNNNNIN. A CHCR repeat occupies 608–752; it reads YIQTINYLET…GYKFIKYYPQ (145 aa). Residues 771–791 form a helical membrane-spanning segment; sequence IFIPLFLDNIDFLFMFIVKFL. 2 disordered regions span residues 842 to 862 and 908 to 970; these read NQNHNGIPSDSHNLSDDNNSQ and ENQT…IINK. 2 stretches are compositionally biased toward low complexity: residues 850-861 and 909-956; these read SDSHNLSDDNNS and NQTN…IQTN. Polar residues predominate over residues 957–967; it reads KQKGNSTTNKI. Residues 1146–1182 are a coiled coil; the sequence is MNDMNKNINDKCIEIEKDKKELEKIKKKQLKKKYNFY. Residues 1189–1224 form an RING-type; atypical zinc finger; that stretch reads CSICKEILSVPMIHFLCKHSYHSYCLKDNNVCILCH.

It is found in the membrane. This is RING finger protein PFE0100w from Plasmodium falciparum (isolate 3D7).